Consider the following 884-residue polypeptide: Alanine--tRNA ligase (884 aa).

4 residues coordinate Zn(2+): histidine 562, histidine 566, cysteine 674, and histidine 678.

The protein belongs to the class-II aminoacyl-tRNA synthetase family. Zn(2+) is required as a cofactor.

It localises to the cytoplasm. The catalysed reaction is tRNA(Ala) + L-alanine + ATP = L-alanyl-tRNA(Ala) + AMP + diphosphate. Its function is as follows. Catalyzes the attachment of alanine to tRNA(Ala) in a two-step reaction: alanine is first activated by ATP to form Ala-AMP and then transferred to the acceptor end of tRNA(Ala). Also edits incorrectly charged Ser-tRNA(Ala) and Gly-tRNA(Ala) via its editing domain. This Rhizobium johnstonii (strain DSM 114642 / LMG 32736 / 3841) (Rhizobium leguminosarum bv. viciae) protein is Alanine--tRNA ligase.